A 673-amino-acid polypeptide reads, in one-letter code: MAESSLYRQRLEVIAEKRRLQEEIRAARREVEEEKLRVERLKRKSLRERWLMDGAAAVPEPSEDPTSKDPQSPEGQAQARIRNLEDSLFTLQSQLQLLQSASTGAQHKPSGRPSWRRQGHRPLSQSIVEAGSVGQTDLNKRASLPAGLVGTPPESPSEPREDVLGFLPGPRQVPGAAGDSSEANGPCPSPIPTPEQGLSQRAVPSEGRVGEAKGGGVVSVVWEGLRATEDCATGATGPELEAKVEEVVLEAIGDRKGAGSLELPAWVKEDRGIVEVVWEGVGGSDAEAMGEIGRVPEVVQTSSPRLQERLEAAASIEGEDVPQGSPEGDGQGGSGGEEGSFIWVERVTLSEEWEELLVEGLEGPEVAGRERGDESPLGAEGAKTGGGEETWEAEKRKAEESMGIGSEEKPGTGRDEAEMSPVVERKGGEKKLELESRGSAEKLGTEREGGEEPLGIERKVEGHLRAEKEGDEEKRGAEEEEVEEPLGVEKKGGEEEPEATKEPLEAERKGGEETLEAEKRGGEESLETEKTQGTEGDLNLEQGSREGSESQAEEMNEAGPPLEANTETRPEKEGPQPQEKPVGALEEEGVKPQTAAEGQGPLGDATPLLAETPAPEQPAECQPLLQGEGPSANPSAHPVPTYAPARQPEPSAPTEGEEASGPKQKTCQCCAVM.

2 coiled-coil regions span residues 4–49 (SSLY…LRER) and 75–101 (GQAQ…LQSA). Disordered stretches follow at residues 49-78 (RWLM…GQAQ) and 99-213 (QSAS…GEAK). Polar residues predominate over residues 123 to 137 (LSQSIVEAGSVGQTD). Residues Ser124 and Ser143 each carry the phosphoserine modification. Thr151 carries the phosphothreonine modification. A phosphoserine mark is found at Ser155, Ser157, and Ser260. Disordered regions lie at residues 295-343 (VPEV…SFIW) and 356-673 (LLVE…CAVM). Thr301 carries the phosphothreonine modification. Ser325 is subject to Phosphoserine. The segment covering 327–338 (EGDGQGGSGGEE) has biased composition (gly residues). Phosphoserine is present on residues Ser375 and Ser420. 2 stretches are compositionally biased toward basic and acidic residues: residues 392–477 (EAEK…KRGA) and 487–532 (GVEK…EKTQ). Residues Ser544 and Ser660 each carry the phosphoserine modification. S-palmitoyl cysteine attachment occurs at residues Cys667 and Cys669. Cys670 bears the Cysteine methyl ester mark. The S-farnesyl cysteine moiety is linked to residue Cys670. A propeptide spans 671–673 (AVM) (removed in mature form).

It belongs to the paralemmin family. Interacts with SIGIRR. In terms of processing, palmitoylated on Cys-667 and Cys-669 and prenylated on Cys-670; which is required for membrane association.

The protein localises to the cytoplasm. It is found in the cell membrane. ATP-binding protein, which may act as a adapter in the Toll-like receptor (TLR) signaling. The chain is Paralemmin-3 (PALM3) from Homo sapiens (Human).